The sequence spans 596 residues: Fructan 1-exohydrolase w2 (596 aa).

An N-terminal signal peptide occupies residues 1–20; it reads MAQAWAFLLPVLVLGSYVTS. Residue Asp75 is part of the active site. N-linked (GlcNAc...) asparagine glycans are attached at residues Asn168, Asn236, and Asn248. The cysteines at positions 446 and 492 are disulfide-linked. Asn567 carries N-linked (GlcNAc...) asparagine glycosylation.

This sequence belongs to the glycosyl hydrolase 32 family.

It catalyses the reaction Hydrolysis of terminal, non-reducing (2-&gt;1)-linked beta-D-fructofuranose residues in fructans.. With respect to regulation, inhibited by sucrose. In terms of biological role, hydrolyzes inulin-type beta-(2,1)-fructans, but not beta-(2,1)-linkages in branched fructans. Has low activity against beta-(2,6)-linked fructans. May play a role as a beta-(2,1)-trimmer during graminan biosynthesis. The sequence is that of Fructan 1-exohydrolase w2 from Triticum aestivum (Wheat).